A 320-amino-acid chain; its full sequence is Methenyltetrahydromethanopterin cyclohydrolase (320 aa).

It belongs to the MCH family.

The protein localises to the cytoplasm. It catalyses the reaction 5,10-methenyl-5,6,7,8-tetrahydromethanopterin + H2O = N(5)-formyl-5,6,7,8-tetrahydromethanopterin + H(+). In terms of biological role, catalyzes the hydrolysis of methenyl-H(4)MPT(+) to 5-formyl-H(4)MPT. The chain is Methenyltetrahydromethanopterin cyclohydrolase from Methanococcoides burtonii (strain DSM 6242 / NBRC 107633 / OCM 468 / ACE-M).